Reading from the N-terminus, the 2961-residue chain is MGNAPSHSSEDEAAAAGGEGWGPHQDWAAVSGTTPGPGVAAPALPPAAALLEPARLREAAAALLPTPPCESLVSRHRGALFRWLEERLGRGEESVTLEQFRELLEARGAGCSSEQFEEAFAQFDAEGDGTVDAENMLEALKNSSGANLQGELSHIIRQLQACSLVPGFTDIFSESKEGLDIHSSMILRFLHRNRLSSAVMPYPMLEHCNNMCTMRSSVLKESLDQLVQKEKESPGDLTRSPEMDKLKSVAKCYAYIETSSNSADIDKMTNGETSSYWQSDGSACSHWIRLKMKPDVVLRHLSIAVAATDQSYMPQQVTVAVGRNASDLQEVRDVHIPSNVTGYVTLLENANVSQLYVQINIKRCLSDGCDTRIHGLRAVGFQRVKKSGVSVSDASAIWYWSLLTSLVTASMETNPAFVQTVLHNTQKALRHMPPLSLSPGSTDFSTFLSPNVLEEVDSFLIRITSCCSTPEVELTLLAFALARGSVAKVMSSLCTITDHLDTQYDASSLILSMASVRQNLLLKYGKPLQLTLQACDVKGKEDKSGPENLLVEPWTRDGFLTETGKTRASTIFSTGTESAFQVTQIRIMVRRGGIGAQCGLVFAYNSSSDKFCAEEHFKRFEKYDKWKLQELRQFVKSRIGCSSDDLGEDDPIGWFELEEEWDEADVKLQQCRVAKYLMVKFLCTRQESAERLGVQGLTISGYLRPARAEAEQSVTCAHCRKDTEESVCGATLLLRTLQFIQQLAHDLVQQKESGLKYKSFLDFAGLDLQIFWNFYSKLKQNPREECVSAQTLLLQLLQSCFSVLQGDVLAASEEEKAPIQSPKGVEAAKELYTHLCDVVDKVDGDSVPMEILKQEVRNTLLNGAAIFFPNRQTRRNHLFTMMNVTEQEHKQSLQLTFRSLCTYFSDKDPGGLLLLPEKNDLAKMNISEVLAVMDTLVSVAARECELLMLSGAPGEVGSVLFSLFWSVQGSLLSWCYLQLKSTDSGAKDLAVDLIEKYVGQFLASMRAILESLFSQYSGKTIVERLCNSVFSMAARQLVIFLLDFCTLDIPHCVLLREFSVLTELLKKLCSGPEGGLRKLDVETWQQEQPVVLHTWTKESAHNYENNCHEVSVFVSPGATYFEVEFDDRCETEKRYDYLEFTDARGRKTRYDTKVGTDKWPKKVTFKAGPRLQFLFHSDSSHNEWGYKFTVTACGLPDVAVSWGLDLQLLVSRLMGRLASQCMALKSVRQLGSNMVVPQAKMALVLSSPLWKPVFRHQVCPELELEASWPTHPHRNSKEVKNIPDDPCRHFLLDFAQSEPAQNFCGPYSELFKGFIQACRKQAPKTDIVAGSTIDQAVNATFAALVYRTPDLYEKLQKYVNSGGKIALSEEFAQVYSLADGIRIWMLEMKQKSLMSLGNEAEEKHSSEATEVNPESLAKECIEKSLLLLKFLPTGISSKESCEKLETADETSHLQPLNKRQRTSSVVEEHFQASVSPTEAAPPATGDQSPGLGTQPKLPSSSGLPAADVSPATAEEPLSPSTPTRRPPFTRGRLRLLSFRSMEEARLVPTVKEKYPVLKDVMDFIKDQSLSHRSVVKVLSLRKAQAQSILEVLKITQHCAESLGQPHCFHPPFILFLLELLTCQKDFTNYFGHLEGCGADLHKEIRDTYYQLVLFLVKAVKGFSSLNDRSLLPALSCVQTALLHLLDMGWEPNDLAFFVDIQLPDLLMKMSQENISVHDSVISQWSEEDELADAKQNSEWMDECQDGMFEAWYEKIAQEDPEKQRKMHMFIARYCDLLNVDISCDGCDEIAPWHRYRCLQCSDMDLCKTCFLGGVKPEGHGDDHEMVNMEFTCDHCQGLIIGRRMNCNVCDDFDLCYGCYAAKKYSYGHLPTHSITAHPMVTIRISDRQRLIQPYIHNYSWLLFAALALYSAHLASAEDVDGEKLDPQTRSSATTLRSQCMQLVGDCLMKAHQGKGLKALALLGVLPDGDSSLEDQALPVTVPTGASEEQLEKKAVQGAELSEAGNGKRAVHEEIRPVDFKQRNKADKGVSLSKDPSCQTQISDSPADASPPTGLPDAEDSEVSSQKPIEEKAVTPSPEQVFAECSQKRILGLLAAMLPPLKSGPTVPLIDLEHVLPLMFQVVISNAGHLNETYHLTLGLLGQLIIRLLPAEVDAAVIKVLSAKHNLFAAGDSSIVPDGWKTTHLLFSLGAVCLDSRVGLDWACSMAEILRSLNSAPLWRDVIATFTDHCIKQLPFQLKHTNIFTLLVLVGFPQVLCVGTRCVYMDNANEPHNVIILKHFTEKNRAVIVDVKTRKRKTVKDYQLVQKGGGQECGDSRAQLSQYSQHFAFIASHLLQSSMDSHCPEAVEATWVLSLALKGLYKTLKAHGFEEIRATFLQTDLLKLLVKKCSKGTGFSKTWLLRDLEILSIMLYSSKKEINALAEHGDLELDERGDREEEVERPVSSPGDPEQKKLDPLEGLDEPTRICFLMAHDALNAPLHILRAIYELQMKKTDYFFLEVQKRFDGDELTTDERIRSLAQRWQPSKSLRLEEQSAKAVDTDMIILPCLSRPARCDQATAESNPVTQKLISSTESELQQSYAKQRRSKSAALLHKELNCKSKRAVRDYLFRVNEATAVLYARHVLASLLAEWPSHVPVSEDILELSGPAHMTYILDMFMQLEEKHEWEKILQKVLQGCREDMLGTMALAACQFMEEPGMEVQVRESKHPYNNNTNFEDKVHIPGAIYLSIKFDSQCNTEEGCDELAMSSSSDFQQDRHSFSGSQQKWKDFELPGDTLYYRFTSDMSNTEWGYRFTVTAGHLGRFQTGFEILKQMLSEERVVPHLPLAKIWEWLVGVACRQTGHQRLKAIHLLLRIVRCCGHSDLCDLALLKPLWQLFTHMEYGLFEDVTQPGILLPLHRALTELFFVTENRAQELGVLQDYLLALTTDDHLLRCAAQALQNIAAISLAINYPNKATRLWNVEC.

The tract at residues methionine 1 to alanine 41 is disordered. Glycine 2 carries the N-myristoyl glycine lipid modification. An EF-hand domain is found at cysteine 111–alanine 146. A DOC domain is found at leucine 226 to serine 405. 4 positions are modified to phosphoserine: serine 240, serine 1475, serine 1488, and serine 1509. Positions threonine 1446 to glycine 1531 are disordered. The segment covering glycine 1485–glycine 1502 has biased composition (polar residues). Phosphothreonine is present on threonine 1512. Positions proline 1516–glycine 1531 are enriched in low complexity. Serine 1518 carries the post-translational modification Phosphoserine. Phosphothreonine occurs at positions 1521 and 1523. Phosphoserine occurs at positions 1537 and 1540. 2 ZZ-type zinc fingers span residues asparagine 1778–aspartate 1833 and asparagine 1827–isoleucine 1882. Residues cysteine 1783, cysteine 1786, cysteine 1797, cysteine 1800, cysteine 1806, cysteine 1809, histidine 1819, histidine 1823, cysteine 1832, cysteine 1835, cysteine 1846, cysteine 1849, cysteine 1855, cysteine 1858, histidine 1868, and histidine 1872 each coordinate Zn(2+). 2 disordered regions span residues alanine 1994 to glutamate 2078 and leucine 2426 to proline 2455. A compositionally biased stretch (basic and acidic residues) spans alanine 2009–lysine 2027. Over residues lysine 2033 to aspartate 2043 the composition is skewed to polar residues. Over residues leucine 2426–arginine 2440 the composition is skewed to basic and acidic residues. Serine 2444 is subject to Phosphoserine. The residue at position 2667 (lysine 2667) is an N6-acetyllysine.

As to quaternary structure, interacts with KLF6 and KLF9. Interacts via (ZZ-type 2 zinc finger) with histone H3 trimethylated at 'Lys-4' (H3K4me3) and histone H3 acetylated at 'Lys-4' (H3K4ac). Expressed at low levels in cerebellum.

Histone H3 reader which may act as a transcriptional coactivator for KLF6 and KLF9 transcription factors. The sequence is that of Zinc finger ZZ-type and EF-hand domain-containing protein 1 from Homo sapiens (Human).